The following is a 373-amino-acid chain: Schlafen-like protein 1 (373 aa).

The tract at residues 1–67 is disordered; that stretch reads MAALFEENDS…ELSSEEVDIP (67 aa). Residues 247–373 are SLFN-like fold; sequence KAGAKIEFRT…NQVYRLESSV (127 aa).

Belongs to the Schlafen family. Component of the trimeric PUCH (precursor of 21U RNA 5'-end cleavage holoenzyme) complex; consisting of tofu-1, tofu-2 and either slfl-3 or slfl-4; which is required for processing of piRNA precursors. Within the complex, interacts (via N-terminus) with tofu-2 (via N-terminus); the interaction stabilizes tofu-2 and may form a functional nuclease. Within the complex, required for the interaction of tofu-2 (via N-terminus) with slfl-3 (via N-terminus). Interacts (via residues 82-172) with the PETISCO complex subunit tofu-6 (via residues 120-314); the interaction between the PETISCO and PUCH complex members enhances piRNA production in vivo. Expressed in the germline.

It localises to the cytoplasm. Component of the trimeric PUCH (precursor of 21U RNA 5'-end cleavage holoenzyme) complex, that acts as an endoribonuclease processing the 5'-end of precursor Piwi-interacting RNAs (piRNAs). The PUCH complex consists of tofu-1, tofu-2 and either slfl-3 or slfl-4, with tofu-2 exhibiting endoribonuclease activity. PUCH-mediated processing strictly requires a 7-methyl-G cap (m7 G-cap) and an uracil at position three (U3). PUCH also exhibits a strict bias for piRNA precursors with an A or G at position 1. Mature piRNA production is enhanced by the interaction of PUCH with the PETISCO complex, which is stabilizing piRNA precursors and allows their processing by PUCH. The polypeptide is Schlafen-like protein 1 (Caenorhabditis elegans).